The chain runs to 223 residues: Urease accessory protein UreF (223 aa).

This sequence belongs to the UreF family. UreD, UreF and UreG form a complex that acts as a GTP-hydrolysis-dependent molecular chaperone, activating the urease apoprotein by helping to assemble the nickel containing metallocenter of UreC. The UreE protein probably delivers the nickel.

It is found in the cytoplasm. Functionally, required for maturation of urease via the functional incorporation of the urease nickel metallocenter. This is Urease accessory protein UreF from Rhizobium leguminosarum bv. viciae.